A 385-amino-acid polypeptide reads, in one-letter code: DNA replication and repair protein RecF (385 aa).

30 to 37 (GPNGYGKT) lines the ATP pocket.

Belongs to the RecF family.

The protein resides in the cytoplasm. The RecF protein is involved in DNA metabolism; it is required for DNA replication and normal SOS inducibility. RecF binds preferentially to single-stranded, linear DNA. It also seems to bind ATP. In Mycobacterium bovis (strain ATCC BAA-935 / AF2122/97), this protein is DNA replication and repair protein RecF.